The following is a 138-amino-acid chain: MLQPKRRKYRKEQKGRNTGIATRGNAVSFGEFGLKAMGRGRLTARQIESARRAMTRHIKRGGRIWIRIFPDKPISKKPAEVRMGNGKGNPEYYVAEIQPGKMLYEMDGVGEELAREAFRLAAAKLPIATSFVVRQVGT.

Positions 1 to 13 (MLQPKRRKYRKEQ) are enriched in basic residues. The disordered stretch occupies residues 1–20 (MLQPKRRKYRKEQKGRNTGI).

The protein belongs to the universal ribosomal protein uL16 family. As to quaternary structure, part of the 50S ribosomal subunit.

Its function is as follows. Binds 23S rRNA and is also seen to make contacts with the A and possibly P site tRNAs. The polypeptide is Large ribosomal subunit protein uL16 (Ralstonia nicotianae (strain ATCC BAA-1114 / GMI1000) (Ralstonia solanacearum)).